The chain runs to 612 residues: Lysophospholipase (612 aa).

The signal sequence occupies residues 1-9; that stretch reads DITFAGVQR. One can recognise a PLA2c domain in the interval 24-571; the sequence is SCPASRPTVR…DRYCWNGTVN (548 aa). N-linked (GlcNAc...) asparagine glycosylation is found at asparagine 41, asparagine 81, asparagine 116, asparagine 150, asparagine 223, asparagine 267, asparagine 306, asparagine 335, asparagine 427, asparagine 440, asparagine 446, asparagine 477, asparagine 498, asparagine 526, asparagine 532, asparagine 567, and asparagine 571.

The protein belongs to the lysophospholipase family. N-glycosylated.

It is found in the secreted. The enzyme catalyses a 1-acyl-sn-glycero-3-phosphocholine + H2O = sn-glycerol 3-phosphocholine + a fatty acid + H(+). Its function is as follows. Catalyzes the release of fatty acids from lysophospholipids. In Penicillium chrysogenum (Penicillium notatum), this protein is Lysophospholipase.